We begin with the raw amino-acid sequence, 157 residues long: Transcription elongation factor GreA (157 aa).

It belongs to the GreA/GreB family.

In terms of biological role, necessary for efficient RNA polymerase transcription elongation past template-encoded arresting sites. The arresting sites in DNA have the property of trapping a certain fraction of elongating RNA polymerases that pass through, resulting in locked ternary complexes. Cleavage of the nascent transcript by cleavage factors such as GreA or GreB allows the resumption of elongation from the new 3'terminus. GreA releases sequences of 2 to 3 nucleotides. In Bartonella tribocorum (strain CIP 105476 / IBS 506), this protein is Transcription elongation factor GreA.